Consider the following 85-residue polypeptide: MKAGIHPNYRTVVFHDLSADTYFKVGSTINTDRTIELEGESWPYVTLDVSSASHPYYTGKQKEFSKEGSTARFQQRFGRFFTGNK.

It belongs to the bacterial ribosomal protein bL31 family. Type B subfamily. As to quaternary structure, part of the 50S ribosomal subunit.

This Serratia proteamaculans (strain 568) protein is Large ribosomal subunit protein bL31B.